Reading from the N-terminus, the 219-residue chain is Carboxypeptidase Y inhibitor (219 aa).

Met1 carries the N-acetylmethionine modification.

Belongs to the phosphatidylethanolamine-binding protein family. As to quaternary structure, monomer.

Its subcellular location is the cytoplasm. Its function is as follows. Specific and potent inhibitor of carboxypeptidase Y. In Saccharomyces cerevisiae (strain ATCC 204508 / S288c) (Baker's yeast), this protein is Carboxypeptidase Y inhibitor (TFS1).